The primary structure comprises 417 residues: DNA primase small subunit (417 aa).

An N-acetylmethionine modification is found at Met1. Catalysis depends on residues Glu44, Asp109, and Asp111. Mg(2+) contacts are provided by Asp109 and Asp111. 2 residues coordinate Mn(2+): Asp109 and Asp111. Residue 109–111 (DID) coordinates a ribonucleoside 5'-triphosphate. Positions 121, 122, 128, and 131 each coordinate Zn(2+). A Zinc knuckle motif motif is present at residues 121–131 (CCSSADICSKC). 160 to 166 (SGRRGVH) is an a ribonucleoside 5'-triphosphate binding site. Residue Asp305 coordinates Mg(2+). Residue Asp305 participates in Mn(2+) binding. Residues 314–317 (HLLK) and His323 contribute to the a ribonucleoside 5'-triphosphate site.

It belongs to the eukaryotic-type primase small subunit family. Heterodimer of a catalytic subunit PRIM1 and a regulatory subunit PRIM2, also known as the DNA primase complex. Interacts with PRIM2/p58 (via C-terminus). Component of the alpha DNA polymerase complex (also known as the alpha DNA polymerase-primase complex) consisting of four subunits: the catalytic subunit POLA1, the regulatory subunit POLA2, and the primase complex subunits PRIM1 and PRIM2 respectively. Within the complex, POLA1 directly interacts with PRIM2. Mg(2+) serves as cofactor. Mn(2+) is required as a cofactor.

The catalysed reaction is ssDNA + n NTP = ssDNA/pppN(pN)n-1 hybrid + (n-1) diphosphate.. The presence of the regulatory subunit PRIM2/p58 accelerates the kinetics of initiation and primer extension. Its function is as follows. Catalytic subunit of the DNA primase complex and component of the DNA polymerase alpha complex (also known as the alpha DNA polymerase-primase complex) which play an essential role in the initiation of DNA synthesis. During the S phase of the cell cycle, the DNA polymerase alpha complex (composed of a catalytic subunit POLA1, an accessory subunit POLA2 and two primase subunits, the catalytic subunit PRIM1 and the regulatory subunit PRIM2) is recruited to DNA at the replicative forks via direct interactions with MCM10 and WDHD1. The primase subunit of the polymerase alpha complex initiates DNA synthesis by oligomerising short RNA primers on both leading and lagging strands. These primers are initially extended by the polymerase alpha catalytic subunit and subsequently transferred to polymerase delta and polymerase epsilon for processive synthesis on the lagging and leading strand, respectively. In the primase complex, both subunits are necessary for the initial di-nucleotide formation, but the extension of the primer depends only on the catalytic subunit. Can add both ribo- and deoxynucleotides during elongation of the primers. Synthesizes 9-mer RNA primers (also known as the 'unit length' RNA primers). Incorporates only ribonucleotides in the presence of ribo- and deoxy-nucleotide triphosphates (rNTPs, dNTPs). Requires template thymine or cytidine to start the RNA primer synthesis, with an adenine or guanine at its 5'-end. Binds single stranded DNA. This Mus musculus (Mouse) protein is DNA primase small subunit (Prim1).